A 216-amino-acid chain; its full sequence is 3,4-dihydroxy-2-butanone 4-phosphate synthase (216 aa).

D-ribulose 5-phosphate is bound by residues 33–34, Asp-38, 146–150, and Glu-170; these read RE and RRGHT. Residue Glu-34 participates in Mg(2+) binding. Mg(2+) is bound at residue His-149.

Belongs to the DHBP synthase family. In terms of assembly, homodimer. The cofactor is Mg(2+). Mn(2+) is required as a cofactor.

The enzyme catalyses D-ribulose 5-phosphate = (2S)-2-hydroxy-3-oxobutyl phosphate + formate + H(+). The protein operates within cofactor biosynthesis; riboflavin biosynthesis; 2-hydroxy-3-oxobutyl phosphate from D-ribulose 5-phosphate: step 1/1. Catalyzes the conversion of D-ribulose 5-phosphate to formate and 3,4-dihydroxy-2-butanone 4-phosphate. The chain is 3,4-dihydroxy-2-butanone 4-phosphate synthase from Pseudomonas putida (strain ATCC 47054 / DSM 6125 / CFBP 8728 / NCIMB 11950 / KT2440).